Reading from the N-terminus, the 370-residue chain is tRNA-specific 2-thiouridylase MnmA (370 aa).

ATP contacts are provided by residues 10–17 and M36; that span reads AMSGGVDS. C111 acts as the Nucleophile in catalysis. A disulfide bridge links C111 with C209. ATP is bound at residue G135. The segment at 159–161 is interaction with tRNA; the sequence is KDQ. C209 serves as the catalytic Cysteine persulfide intermediate.

The protein belongs to the MnmA/TRMU family.

It is found in the cytoplasm. It carries out the reaction S-sulfanyl-L-cysteinyl-[protein] + uridine(34) in tRNA + AH2 + ATP = 2-thiouridine(34) in tRNA + L-cysteinyl-[protein] + A + AMP + diphosphate + H(+). Functionally, catalyzes the 2-thiolation of uridine at the wobble position (U34) of tRNA, leading to the formation of s(2)U34. The chain is tRNA-specific 2-thiouridylase MnmA from Koribacter versatilis (strain Ellin345).